The sequence spans 367 residues: Succinyl-diaminopimelate desuccinylase (367 aa).

His64 contributes to the Zn(2+) binding site. Residue Asp66 is part of the active site. Zn(2+) is bound at residue Asp95. The active-site Proton acceptor is Glu125. Zn(2+)-binding residues include Glu126, Glu154, and His339.

This sequence belongs to the peptidase M20A family. DapE subfamily. In terms of assembly, homodimer. Zn(2+) serves as cofactor. The cofactor is Co(2+).

The catalysed reaction is N-succinyl-(2S,6S)-2,6-diaminopimelate + H2O = (2S,6S)-2,6-diaminopimelate + succinate. The protein operates within amino-acid biosynthesis; L-lysine biosynthesis via DAP pathway; LL-2,6-diaminopimelate from (S)-tetrahydrodipicolinate (succinylase route): step 3/3. Its function is as follows. Catalyzes the hydrolysis of N-succinyl-L,L-diaminopimelic acid (SDAP), forming succinate and LL-2,6-diaminopimelate (DAP), an intermediate involved in the bacterial biosynthesis of lysine and meso-diaminopimelic acid, an essential component of bacterial cell walls. The sequence is that of Succinyl-diaminopimelate desuccinylase from Sulfurovum sp. (strain NBC37-1).